Reading from the N-terminus, the 445-residue chain is Inner membrane metabolite transport protein YgcS (445 aa).

Topologically, residues 1–22 (MNTSPVRMDDLPLNRFHCRIAA) are cytoplasmic. The helical transmembrane segment at 23–43 (LTFGAHLTDGYVLGVIGYAII) threads the bilayer. Over 44 to 56 (QLTPAMQLTPFMA) the chain is Periplasmic. Residues 57–77 (GMIGGSALLGLFLGSLVLGWI) traverse the membrane as a helical segment. Topologically, residues 78-85 (SDHIGRQK) are cytoplasmic. The chain crosses the membrane as a helical span at residues 86–106 (IFTFSFLLITLASFLQFFATT). The Periplasmic segment spans residues 107–114 (PEHLIGLR). A helical transmembrane segment spans residues 115 to 135 (ILIGIGLGGDYSVGHTLLAEF). The Cytoplasmic portion of the chain corresponds to 136 to 142 (SPRRHRG). Residues 143–163 (ILLGAFSVVWTVGYVLASIAG) traverse the membrane as a helical segment. Residues 164–175 (HHFISENPEAWR) lie on the Periplasmic side of the membrane. The helical transmembrane segment at 176–196 (WLLASAALPALLITLLRWGTP) threads the bilayer. Topologically, residues 197 to 253 (ESPRWLLRQGRFAEAHAIVHRYFGPHVLLGDEVVTATHKHIKTLFSSRYWRRTAFNS) are cytoplasmic. The helical transmembrane segment at 254–274 (VFFVCLVIPWFVIYTWLPTIA) threads the bilayer. Residues 275–286 (QTIGLEDALTAS) lie on the Periplasmic side of the membrane. A helical membrane pass occupies residues 287-307 (LMLNALLIVGALLGLVLTHLL). Over 308-311 (AHRK) the chain is Cytoplasmic. A helical membrane pass occupies residues 312 to 332 (FLLGSFLLLAATLVVMACLPS). The Periplasmic portion of the chain corresponds to 333–337 (GSSLT). A helical transmembrane segment spans residues 338 to 358 (LLLFVLFSTTISAVSNLVGIL). Residues 359 to 369 (PAESFPTDIRS) are Cytoplasmic-facing. Residues 370-390 (LGVGFATAMSRLGAAVSTGLL) traverse the membrane as a helical segment. At 391–400 (PWVLAQWGMQ) the chain is on the periplasmic side. A helical transmembrane segment spans residues 401–421 (VTLLLLATVLLVGFVVTWLWA). The Cytoplasmic portion of the chain corresponds to 422–445 (PETKALPLVAAGNVGGANEHSVSV).

Belongs to the major facilitator superfamily. Sugar transporter (TC 2.A.1.1) family.

It localises to the cell inner membrane. This Escherichia coli (strain K12) protein is Inner membrane metabolite transport protein YgcS (ygcS).